Here is a 217-residue protein sequence, read N- to C-terminus: Small ribosomal subunit protein uS3 (217 aa).

Positions 38–106 constitute a KH type-2 domain; sequence IRKYIDNALQ…KVHINVIEIK (69 aa).

This sequence belongs to the universal ribosomal protein uS3 family. Part of the 30S ribosomal subunit. Forms a tight complex with proteins S10 and S14.

Its function is as follows. Binds the lower part of the 30S subunit head. Binds mRNA in the 70S ribosome, positioning it for translation. This is Small ribosomal subunit protein uS3 from Staphylococcus saprophyticus subsp. saprophyticus (strain ATCC 15305 / DSM 20229 / NCIMB 8711 / NCTC 7292 / S-41).